The following is a 481-amino-acid chain: tRNA-2-methylthio-N(6)-dimethylallyladenosine synthase (481 aa).

Positions 24–140 (RKLFIESYGC…LPNLINEVEE (117 aa)) constitute an MTTase N-terminal domain. Residues Cys33, Cys69, Cys103, Cys178, Cys182, and Cys185 each coordinate [4Fe-4S] cluster. In terms of domain architecture, Radical SAM core spans 164–410 (QSNGVSAFVS…VDLQQKHSKQ (247 aa)). The 64-residue stretch at 413-476 (NSVIGTTVEV…SATLIGEPIG (64 aa)) folds into the TRAM domain.

This sequence belongs to the methylthiotransferase family. MiaB subfamily. In terms of assembly, monomer. [4Fe-4S] cluster is required as a cofactor.

Its subcellular location is the cytoplasm. It catalyses the reaction N(6)-dimethylallyladenosine(37) in tRNA + (sulfur carrier)-SH + AH2 + 2 S-adenosyl-L-methionine = 2-methylsulfanyl-N(6)-dimethylallyladenosine(37) in tRNA + (sulfur carrier)-H + 5'-deoxyadenosine + L-methionine + A + S-adenosyl-L-homocysteine + 2 H(+). Functionally, catalyzes the methylthiolation of N6-(dimethylallyl)adenosine (i(6)A), leading to the formation of 2-methylthio-N6-(dimethylallyl)adenosine (ms(2)i(6)A) at position 37 in tRNAs that read codons beginning with uridine. The polypeptide is tRNA-2-methylthio-N(6)-dimethylallyladenosine synthase (Christiangramia forsetii (strain DSM 17595 / CGMCC 1.15422 / KT0803) (Gramella forsetii)).